The primary structure comprises 259 residues: MNILISNDDGIQAAGVRCLAAALAQVGGHQITVVCPDRERSATGHALTLHKPLRVDPVREGFPPEVQAWACSGTPSDCVKLGLDGLLQQPPDWVIAGINQGANLGTDVLYSGTVSAAMEGLLEGIPSLAVSLASFTHQDFQPAAQVVLMLLEKLSLKPLEKPMLLNVNVPPLGLAEIRGMVLARLAWRKYTDLYEKRVDPRGKAYYWLAGEVVEEEVDPCSDVRAVAEGYVSITPLQPDLTAYAAFESLQRWGLSAFGF.

Aspartate 8, aspartate 9, serine 41, and asparagine 99 together coordinate a divalent metal cation.

It belongs to the SurE nucleotidase family. A divalent metal cation is required as a cofactor.

It is found in the cytoplasm. It catalyses the reaction a ribonucleoside 5'-phosphate + H2O = a ribonucleoside + phosphate. Functionally, nucleotidase that shows phosphatase activity on nucleoside 5'-monophosphates. This chain is 5'-nucleotidase SurE, found in Synechococcus sp. (strain JA-3-3Ab) (Cyanobacteria bacterium Yellowstone A-Prime).